The primary structure comprises 99 residues: MALTKAEMSEYLFDKLGLSKRDAKELVELFFEEIRRALENGEQVKLSGFGNFDLRDKNQRPGRNPKTGEDIPITARRVVTFRPGQKLKSRVENATPKAE.

It belongs to the bacterial histone-like protein family. As to quaternary structure, heterodimer of an alpha and a beta chain.

Its function is as follows. This protein is one of the two subunits of integration host factor, a specific DNA-binding protein that functions in genetic recombination as well as in transcriptional and translational control. The chain is Integration host factor subunit alpha from Enterobacter sp. (strain 638).